The following is a 382-amino-acid chain: MIOREX complex component 5 (382 aa).

The N-terminal 12 residues, 1–12 (MRRTFSQLATRL), are a transit peptide targeting the mitochondrion.

As to quaternary structure, associates with the mitochondrial ribosome.

It localises to the mitochondrion. In terms of biological role, component of MIOREX complexes, large expressome-like assemblies of ribosomes with factors involved in all the steps of post-transcriptional gene expression. In Saccharomyces cerevisiae (strain ATCC 204508 / S288c) (Baker's yeast), this protein is MIOREX complex component 5.